Here is a 570-residue protein sequence, read N- to C-terminus: Urease subunit alpha (570 aa).

Residues Gly-131–Phe-570 enclose the Urease domain. 3 residues coordinate Ni(2+): His-136, His-138, and Lys-219. N6-carboxylysine is present on Lys-219. His-221 is a substrate binding site. Ni(2+) contacts are provided by His-248 and His-274. His-322 functions as the Proton donor in the catalytic mechanism. Asp-362 is a binding site for Ni(2+).

This sequence belongs to the metallo-dependent hydrolases superfamily. Urease alpha subunit family. Heterotrimer of UreA (gamma), UreB (beta) and UreC (alpha) subunits. Three heterotrimers associate to form the active enzyme. The cofactor is Ni cation. Carboxylation allows a single lysine to coordinate two nickel ions.

The protein localises to the cytoplasm. The catalysed reaction is urea + 2 H2O + H(+) = hydrogencarbonate + 2 NH4(+). Its pathway is nitrogen metabolism; urea degradation; CO(2) and NH(3) from urea (urease route): step 1/1. This is Urease subunit alpha from Sinorhizobium fredii (strain NBRC 101917 / NGR234).